A 360-amino-acid chain; its full sequence is 1-deoxy-D-xylulose 5-phosphate reductoisomerase (360 aa).

5 residues coordinate NADPH: serine 7, glycine 8, serine 9, isoleucine 10, and asparagine 115. Lysine 116 is a binding site for 1-deoxy-D-xylulose 5-phosphate. Glutamate 117 serves as a coordination point for NADPH. Aspartate 135 contacts Mn(2+). Residues serine 136, glutamate 137, serine 159, and histidine 182 each contribute to the 1-deoxy-D-xylulose 5-phosphate site. Glutamate 137 serves as a coordination point for Mn(2+). Glycine 188 contacts NADPH. 1-deoxy-D-xylulose 5-phosphate contacts are provided by serine 195, asparagine 200, lysine 201, and glutamate 204. Glutamate 204 contacts Mn(2+).

This sequence belongs to the DXR family. It depends on Mg(2+) as a cofactor. Mn(2+) serves as cofactor.

The enzyme catalyses 2-C-methyl-D-erythritol 4-phosphate + NADP(+) = 1-deoxy-D-xylulose 5-phosphate + NADPH + H(+). It functions in the pathway isoprenoid biosynthesis; isopentenyl diphosphate biosynthesis via DXP pathway; isopentenyl diphosphate from 1-deoxy-D-xylulose 5-phosphate: step 1/6. In terms of biological role, catalyzes the NADPH-dependent rearrangement and reduction of 1-deoxy-D-xylulose-5-phosphate (DXP) to 2-C-methyl-D-erythritol 4-phosphate (MEP). The sequence is that of 1-deoxy-D-xylulose 5-phosphate reductoisomerase from Campylobacter fetus subsp. fetus (strain 82-40).